A 482-amino-acid polypeptide reads, in one-letter code: BEL1-like homeodomain protein 7 (482 aa).

Positions 118–134 (SKYLKAAQELLDETVNV) are SR/KY domain. The segment at 167–238 (ERQELQSKLS…CLRDAISGQI (72 aa)) is BELL domain. The homeobox DNA-binding region spans 285-347 (TWRPQRGLPD…NARVRLWKPM (63 aa)). Residues 358–401 (DALQENDPNQSSENTPEITEIQELQTESSSNNGHVPGVASSSMR) are disordered. Residues 363–401 (NDPNQSSENTPEITEIQELQTESSSNNGHVPGVASSSMR) show a composition bias toward polar residues.

Belongs to the TALE/BELL homeobox family. As to quaternary structure, may form heterodimeric complexes with TALE/KNOX proteins.

It localises to the nucleus. This is BEL1-like homeodomain protein 7 (BLH7) from Arabidopsis thaliana (Mouse-ear cress).